The primary structure comprises 227 residues: Ubiquitin domain-containing protein 1 (227 aa).

Positions 1-42 (MGNCVGRQRRERPAAPGHPRKRAGRNEPLKKERLKWKSDYPM) are disordered. Residues 24-38 (GRNEPLKKERLKWKS) show a composition bias toward basic and acidic residues. One can recognise a Ubiquitin-like domain in the interval 149-224 (FPLKVRLSTG…IQVIINQPPP (76 aa)).

Interacts with UBTD1.

In terms of biological role, may be involved in the regulation of cellular senescence through a positive feedback loop with TP53. Is a TP53 downstream target gene that increases the stability of TP53 protein by promoting the ubiquitination and degradation of MDM2. This is Ubiquitin domain-containing protein 1 (Ubtd1) from Mus musculus (Mouse).